Consider the following 29-residue polypeptide: Potassium channel toxin alpha-KTx 8.4 (29 aa).

3 disulfides stabilise this stretch: cysteine 3–cysteine 19, cysteine 6–cysteine 24, and cysteine 10–cysteine 26.

Belongs to the short scorpion toxin superfamily. Potassium channel inhibitor family. Alpha-KTx 08 subfamily. In terms of tissue distribution, expressed by the venom gland.

The protein localises to the secreted. Its function is as follows. Inhibits voltage-gated potassium channels. The sequence is that of Potassium channel toxin alpha-KTx 8.4 from Leiurus hebraeus (Hebrew deathstalker scorpion).